The sequence spans 510 residues: NAD(P)H-quinone oxidoreductase subunit 2 A, chloroplastic (510 aa).

Helical transmembrane passes span L24–L44, I57–F77, I99–I119, M124–C144, L149–Y169, Y183–G203, P227–A247, W295–I315, M323–D343, Y354–L374, A395–F415, L418–L438, and M484–I504.

Belongs to the complex I subunit 2 family. In terms of assembly, NDH is composed of at least 16 different subunits, 5 of which are encoded in the nucleus.

It is found in the plastid. Its subcellular location is the chloroplast thylakoid membrane. The catalysed reaction is a plastoquinone + NADH + (n+1) H(+)(in) = a plastoquinol + NAD(+) + n H(+)(out). The enzyme catalyses a plastoquinone + NADPH + (n+1) H(+)(in) = a plastoquinol + NADP(+) + n H(+)(out). Functionally, NDH shuttles electrons from NAD(P)H:plastoquinone, via FMN and iron-sulfur (Fe-S) centers, to quinones in the photosynthetic chain and possibly in a chloroplast respiratory chain. The immediate electron acceptor for the enzyme in this species is believed to be plastoquinone. Couples the redox reaction to proton translocation, and thus conserves the redox energy in a proton gradient. This chain is NAD(P)H-quinone oxidoreductase subunit 2 A, chloroplastic, found in Solanum lycopersicum (Tomato).